The sequence spans 57 residues: Metallothionein-2 (57 aa).

Positions 1-28 (PDPCCNDKCDCKEGECKTGCKCTSCRCP) are beta. The a divalent metal cation site is built by C4, C5, C9, C11, C16, C20, C22, C25, C27, C30, C33, C37, C39, C45, C49, C53, C55, and C56. Positions 29–57 (PCEQCSSGCKCANKEDCRKTCSKPCSCCP) are alpha.

The protein belongs to the metallothionein superfamily. Type 3 family.

In terms of biological role, metallothioneins have a high content of cysteine residues that bind various heavy metals. Class I MTS in marine crustacea are involved in the sequestration of elevated levels of heavy-metal ions. The sequence is that of Metallothionein-2 from Scylla serrata (Mud crab).